Reading from the N-terminus, the 502-residue chain is L-ornithine N(5)-monooxygenase (502 aa).

The segment covering 1–10 has biased composition (basic and acidic residues); the sequence is MEPVERKLEI. The tract at residues 1 to 34 is disordered; sequence MEPVERKLEIGSRSYSKMPLTQQRSSGEPPRLKA. Residues 13 to 26 are compositionally biased toward polar residues; that stretch reads RSYSKMPLTQQRSS. FAD contacts are provided by residues 83–91 and Q102; that span reads ERQKQFAWH. A substrate-binding site is contributed by K107. Residue V168 coordinates FAD. Residues 254–257 and R279 contribute to the NADP(+) site; that span reads SGQS. Residues 293 to 296 and N323 contribute to the substrate site; that span reads NEVF. Residue 323-325 coordinates NADP(+); that stretch reads NYS. FAD is bound at residue 466–468; it reads SLL. S469 contributes to the substrate binding site.

It belongs to the lysine N(6)-hydroxylase/L-ornithine N(5)-oxygenase family. As to quaternary structure, homotetramer. The cofactor is FAD.

The catalysed reaction is L-ornithine + NADPH + O2 = N(5)-hydroxy-L-ornithine + NADP(+) + H2O. It carries out the reaction L-ornithine + NADH + O2 = N(5)-hydroxy-L-ornithine + NAD(+) + H2O. The protein operates within siderophore biosynthesis. In terms of biological role, catalyzes the conversion of L-ornithine to N(5)-hydroxyornithine, the first step in the biosynthesis of all hydroxamate-containing siderophores, such as deferriferrichrysin. The polypeptide is L-ornithine N(5)-monooxygenase (Aspergillus oryzae (strain ATCC 42149 / RIB 40) (Yellow koji mold)).